Reading from the N-terminus, the 757-residue chain is Glutathione biosynthesis bifunctional protein GshAB (757 aa).

Residues 1–337 (MNIQQIVKEK…LGRARLGEVA (337 aa)) form a glutamate--cysteine ligase region. Residues 494–757 (KKVLAKAGFN…VLGMLFPELV (264 aa)) form the ATP-grasp domain. Position 521–580 (521–580 (PLFEGKAVVIKPKSTNFGLGISIFQQGVHDKADFAKAVEIAFREDKEVMVEDYLVGTEYR)) interacts with ATP. Mg(2+) is bound by residues Asp702, Glu723, and Asn725. Mn(2+) is bound by residues Asp702, Glu723, and Asn725.

The protein in the N-terminal section; belongs to the glutamate--cysteine ligase type 1 family. Type 2 subfamily. In terms of assembly, monomer. It depends on Mg(2+) as a cofactor. The cofactor is Mn(2+).

It carries out the reaction L-cysteine + L-glutamate + ATP = gamma-L-glutamyl-L-cysteine + ADP + phosphate + H(+). The enzyme catalyses gamma-L-glutamyl-L-cysteine + glycine + ATP = glutathione + ADP + phosphate + H(+). It functions in the pathway sulfur metabolism; glutathione biosynthesis; glutathione from L-cysteine and L-glutamate: step 1/2. The protein operates within sulfur metabolism; glutathione biosynthesis; glutathione from L-cysteine and L-glutamate: step 2/2. Synthesizes glutathione from L-glutamate and L-cysteine via gamma-L-glutamyl-L-cysteine. This chain is Glutathione biosynthesis bifunctional protein GshAB, found in Mannheimia succiniciproducens (strain KCTC 0769BP / MBEL55E).